We begin with the raw amino-acid sequence, 468 residues long: Phosphoglucosamine mutase (468 aa).

Catalysis depends on Ser-112, which acts as the Phosphoserine intermediate. Mg(2+) is bound by residues Ser-112, Asp-254, Asp-256, and Asp-258. Position 112 is a phosphoserine (Ser-112).

It belongs to the phosphohexose mutase family. The cofactor is Mg(2+). Activated by phosphorylation.

The enzyme catalyses alpha-D-glucosamine 1-phosphate = D-glucosamine 6-phosphate. In terms of biological role, catalyzes the conversion of glucosamine-6-phosphate to glucosamine-1-phosphate. The protein is Phosphoglucosamine mutase of Prochlorococcus marinus (strain MIT 9313).